The chain runs to 30 residues: Cycloviolacin-O24 (30 aa).

The segment at residues 1-30 is a cross-link (cyclopeptide (Gly-Asn)); it reads GLPTCGETCFGGTCNTPGCTCDPWPVCTHN. Intrachain disulfides connect Cys5-Cys19, Cys9-Cys21, and Cys14-Cys27.

In terms of processing, this is a cyclic peptide. Expressed in leaves but not in petals, petioles, roots and runners (at protein level).

Probably participates in a plant defense mechanism. Has hemolytic activity. The polypeptide is Cycloviolacin-O24 (Viola odorata (Sweet violet)).